We begin with the raw amino-acid sequence, 330 residues long: Ribosomal RNA small subunit methyltransferase H (330 aa).

S-adenosyl-L-methionine contacts are provided by residues 48–50 (GGH), aspartate 67, leucine 101, aspartate 115, and glutamine 122.

The protein belongs to the methyltransferase superfamily. RsmH family.

The protein resides in the cytoplasm. The enzyme catalyses cytidine(1402) in 16S rRNA + S-adenosyl-L-methionine = N(4)-methylcytidine(1402) in 16S rRNA + S-adenosyl-L-homocysteine + H(+). Specifically methylates the N4 position of cytidine in position 1402 (C1402) of 16S rRNA. This Pseudarthrobacter chlorophenolicus (strain ATCC 700700 / DSM 12829 / CIP 107037 / JCM 12360 / KCTC 9906 / NCIMB 13794 / A6) (Arthrobacter chlorophenolicus) protein is Ribosomal RNA small subunit methyltransferase H.